Consider the following 111-residue polypeptide: Large ribosomal subunit protein uL24 (111 aa).

The protein belongs to the universal ribosomal protein uL24 family. Part of the 50S ribosomal subunit.

Functionally, one of two assembly initiator proteins, it binds directly to the 5'-end of the 23S rRNA, where it nucleates assembly of the 50S subunit. In terms of biological role, one of the proteins that surrounds the polypeptide exit tunnel on the outside of the subunit. This Bifidobacterium longum (strain DJO10A) protein is Large ribosomal subunit protein uL24.